The following is a 332-amino-acid chain: Ribosomal RNA small subunit methyltransferase H (332 aa).

Residues 39–41, aspartate 56, phenylalanine 83, aspartate 100, and glutamine 107 contribute to the S-adenosyl-L-methionine site; that span reads GGY.

Belongs to the methyltransferase superfamily. RsmH family.

It is found in the cytoplasm. It catalyses the reaction cytidine(1402) in 16S rRNA + S-adenosyl-L-methionine = N(4)-methylcytidine(1402) in 16S rRNA + S-adenosyl-L-homocysteine + H(+). Its function is as follows. Specifically methylates the N4 position of cytidine in position 1402 (C1402) of 16S rRNA. The sequence is that of Ribosomal RNA small subunit methyltransferase H from Bartonella grahamii (strain as4aup).